Here is a 134-residue protein sequence, read N- to C-terminus: DNA-binding protein inhibitor ID-2 (134 aa).

A phosphoserine mark is found at Ser14 and Ser25. Residues 23–75 (SRSKTPVDDPMSLLYNMNDCYSKLKELVPSIPQNKKVSKMEILQHVIDYILDL) enclose the bHLH domain. The Nuclear export signal motif lies at 106–115 (LNTDISILSL).

In terms of assembly, interacts with GATA4 and NKX2-5. Interacts with NR0B2. Interacts with CLOCK and BMAL1. Interacts with IFI204. Interacts with NEDD9/HEF1. Interacts with ASB4; this interaction promotes ID2 proteasomal degradation. Ubiquitinated in a ASB4-depedent manner, leading to proteasomal degradation. Post-translationally, phosphorylated in vitro by CDK1, PKA and PKC.

Its subcellular location is the cytoplasm. It localises to the nucleus. In terms of biological role, transcriptional regulator (lacking a basic DNA binding domain) which negatively regulates the basic helix-loop-helix (bHLH) transcription factors by forming heterodimers and inhibiting their DNA binding and transcriptional activity. Implicated in regulating a variety of cellular processes, including cellular growth, senescence, differentiation, apoptosis, angiogenesis, and neoplastic transformation. Inhibits skeletal muscle and cardiac myocyte differentiation. Regulates the circadian clock by repressing the transcriptional activator activity of the CLOCK-BMAL1 heterodimer. Restricts the CLOCK and BMAL1 localization to the cytoplasm. Plays a role in both the input and output pathways of the circadian clock: in the input component, is involved in modulating the magnitude of photic entrainment and in the output component, contributes to the regulation of a variety of liver clock-controlled genes involved in lipid metabolism. The protein is DNA-binding protein inhibitor ID-2 (ID2) of Sus scrofa (Pig).